The primary structure comprises 92 residues: Cell division protein FtsB (92 aa).

The Cytoplasmic portion of the chain corresponds to 1 to 3; the sequence is MRF. A helical membrane pass occupies residues 4 to 21; that stretch reads FQVGLLCLALFVQYRLWF. The Periplasmic segment spans residues 22-92; that stretch reads GHNGVQDYTR…TFIRVLPAQQ (71 aa). The stretch at 40 to 73 forms a coiled coil; the sequence is LQTNEKLIKRNKVLTADIEDLKLGHEGIEERARN.

The protein belongs to the FtsB family. Part of a complex composed of FtsB, FtsL and FtsQ.

Its subcellular location is the cell inner membrane. In terms of biological role, essential cell division protein. May link together the upstream cell division proteins, which are predominantly cytoplasmic, with the downstream cell division proteins, which are predominantly periplasmic. This Pseudoalteromonas translucida (strain TAC 125) protein is Cell division protein FtsB.